Here is a 131-residue protein sequence, read N- to C-terminus: Fumarate reductase subunit C (131 aa).

3 helical membrane-spanning segments follow: residues glutamate 30–leucine 50, isoleucine 61–leucine 81, and isoleucine 110–phenylalanine 130.

The protein belongs to the FrdC family. Part of an enzyme complex containing four subunits: a flavoprotein (FrdA), an iron-sulfur protein (FrdB), and two hydrophobic anchor proteins (FrdC and FrdD).

The protein localises to the cell inner membrane. Functionally, two distinct, membrane-bound, FAD-containing enzymes are responsible for the catalysis of fumarate and succinate interconversion; fumarate reductase is used in anaerobic growth, and succinate dehydrogenase is used in aerobic growth. Anchors the catalytic components of the fumarate reductase complex to the cell inner membrane, binds quinones. The chain is Fumarate reductase subunit C from Klebsiella pneumoniae subsp. pneumoniae (strain ATCC 700721 / MGH 78578).